The chain runs to 141 residues: Hemoglobin subunit alpha (141 aa).

The Globin domain maps to 1–141 (VLSSTDKSNV…VSTVLTSKYR (141 aa)). At Ser-3 the chain carries Phosphoserine. An N6-succinyllysine mark is found at Lys-7 and Lys-11. The residue at position 16 (Lys-16) is an N6-acetyllysine; alternate. Lys-16 is modified (N6-succinyllysine; alternate). A Phosphotyrosine modification is found at Tyr-24. Ser-35 is modified (phosphoserine). N6-succinyllysine is present on Lys-40. O2 is bound at residue His-58. His-87 serves as a coordination point for heme b. Ser-102 bears the Phosphoserine mark. Phosphothreonine is present on Thr-108. Ser-124 and Ser-131 each carry phosphoserine. A phosphothreonine mark is found at Thr-134 and Thr-137. Ser-138 carries the phosphoserine modification.

Belongs to the globin family. Heterotetramer of two alpha chains and two beta chains. As to expression, red blood cells.

Functionally, involved in oxygen transport from the lung to the various peripheral tissues. In terms of biological role, hemopressin acts as an antagonist peptide of the cannabinoid receptor CNR1. Hemopressin-binding efficiently blocks cannabinoid receptor CNR1 and subsequent signaling. This is Hemoglobin subunit alpha (HBA) from Pteropus poliocephalus (Grey-headed flying fox).